The chain runs to 151 residues: Phospholipase A2 inhibitor BjussuMIP (151 aa).

Positions 1–4 (LANG) are cleaved as a signal peptide. One can recognise a C-type lectin domain in the interval 31 to 146 (LKYAFLTVHK…CDENLLVVCE (116 aa)). Cystine bridges form between C68/C145 and C123/C137. N107 carries N-linked (GlcNAc...) asparagine glycosylation.

It belongs to the alpha-type phospholipase A2 inhibitor family. In terms of assembly, oligomer. In terms of tissue distribution, expressed by the liver.

It is found in the secreted. Inhibits enzymatic, anticoagulant, edema formation, myotoxicity activities induced by snakes phospholipase A2. Is oligomeric, but it is probable that each of its subunits can bind and inactive a PLA2 molecule. This chain is Phospholipase A2 inhibitor BjussuMIP, found in Bothrops jararacussu (Jararacussu).